Consider the following 158-residue polypeptide: NADPH-dependent 7-cyano-7-deazaguanine reductase (158 aa).

Over residues 1–13 the composition is skewed to polar residues; sequence MAKRSNTTMTSAG. Positions 1–37 are disordered; it reads MAKRSNTTMTSAGLQLGREVAPPDSPETAKLDRVPNP. Positions 27–37 are enriched in basic and acidic residues; sequence ETAKLDRVPNP. Residue cysteine 56 is the Thioimide intermediate of the active site. The Proton donor role is filled by aspartate 63. Substrate contacts are provided by residues 78-80 and 97-98; these read VES and HE.

The protein belongs to the GTP cyclohydrolase I family. QueF type 1 subfamily.

Its subcellular location is the cytoplasm. The catalysed reaction is 7-aminomethyl-7-carbaguanine + 2 NADP(+) = 7-cyano-7-deazaguanine + 2 NADPH + 3 H(+). It participates in tRNA modification; tRNA-queuosine biosynthesis. In terms of biological role, catalyzes the NADPH-dependent reduction of 7-cyano-7-deazaguanine (preQ0) to 7-aminomethyl-7-deazaguanine (preQ1). This chain is NADPH-dependent 7-cyano-7-deazaguanine reductase, found in Bradyrhizobium sp. (strain ORS 278).